Reading from the N-terminus, the 323-residue chain is Beta-ketoacyl-[acyl-carrier-protein] synthase III (323 aa).

Catalysis depends on residues Cys112 and His250. An ACP-binding region spans residues 251–255 (QANYR). Asn280 is an active-site residue.

It belongs to the thiolase-like superfamily. FabH family. Homodimer.

The protein resides in the cytoplasm. It catalyses the reaction malonyl-[ACP] + acetyl-CoA + H(+) = 3-oxobutanoyl-[ACP] + CO2 + CoA. It participates in lipid metabolism; fatty acid biosynthesis. Functionally, catalyzes the condensation reaction of fatty acid synthesis by the addition to an acyl acceptor of two carbons from malonyl-ACP. Catalyzes the first condensation reaction which initiates fatty acid synthesis and may therefore play a role in governing the total rate of fatty acid production. Possesses both acetoacetyl-ACP synthase and acetyl transacylase activities. Its substrate specificity determines the biosynthesis of branched-chain and/or straight-chain of fatty acids. This is Beta-ketoacyl-[acyl-carrier-protein] synthase III from Clostridium beijerinckii (strain ATCC 51743 / NCIMB 8052) (Clostridium acetobutylicum).